A 524-amino-acid chain; its full sequence is Cytochrome P450 4F3 (524 aa).

The helical transmembrane segment at 19-39 (WLLLLLAGASCLLAYILTPIY) threads the bilayer. Cysteine 468 contacts heme.

This sequence belongs to the cytochrome P450 family. Heme is required as a cofactor. Highest level in polymorphonuclear leukocytes and dendritic cells. Detectable in lymph nodes, spleen, bone marrow and peripheral blood. Highly expressed in ovary. Very low level in liver, kidney, and smooth muscle. Expressed in neutrophils (at protein level).

It localises to the endoplasmic reticulum membrane. The protein resides in the microsome membrane. It catalyses the reaction leukotriene B4 + reduced [NADPH--hemoprotein reductase] + O2 = 18-hydroxy-leukotriene B4 + oxidized [NADPH--hemoprotein reductase] + H2O + H(+). The enzyme catalyses leukotriene B4 + reduced [NADPH--hemoprotein reductase] + O2 = 19-hydroxy-leukotriene B4 + oxidized [NADPH--hemoprotein reductase] + H2O + H(+). It functions in the pathway lipid metabolism; leukotriene B4 degradation. A cytochrome P450 monooxygenase involved in the metabolism of the pro-inflammatory lipid mediator leukotriene B4 (LTB4). Hydroxylates at the omega-1 and omega-2 positions LTB4. This oxidation step leads to LTB4 inactivation, which is postulated to be a crucial part of the resolution of inflammation. Mechanistically, uses molecular oxygen inserting one oxygen atom into a substrate, and reducing the second into a water molecule, with two electrons provided by NADPH via cytochrome P450 reductase (CPR; NADPH-ferrihemoprotein reductase). This is Cytochrome P450 4F3 from Mus musculus (Mouse).